Reading from the N-terminus, the 509-residue chain is Cytochrome P450 monooxygenase cpaH (509 aa).

N-linked (GlcNAc...) asparagine glycosylation is present at asparagine 15. The helical transmembrane segment at threonine 31–leucine 51 threads the bilayer. Asparagine 306 and asparagine 412 each carry an N-linked (GlcNAc...) asparagine glycan. Residue cysteine 453 participates in heme binding.

This sequence belongs to the cytochrome P450 family. Heme is required as a cofactor.

It is found in the membrane. The protein operates within secondary metabolite biosynthesis. Its function is as follows. Cytochrome P450 monooxygenase; part of the gene cluster that mediates the biosynthesis of the fungal neurotoxin cyclopiazonic acid (CPA), a nanomolar inhibitor of Ca(2+)-ATPase with a unique pentacyclic indole tetramic acid scaffold. The hybrid two module polyketide synthase-nonribosomal peptide synthetase (PKS-NRPS) cpaS incorporates acetyl-CoA, malonyl-CoA, and tryptophan (Trp) and utilizes a C-terminal redox-incompetent reductase domain to make and release the tryptophan tetramic acid, cyclo-acetoacetyl-L-tryptophan (c-AATrp), as the first intermediate in the pathway. CpaS catalyzes a Dieckmann-type cyclization on the N-acetoacetyl-Trp intermediate bound in thioester linkage to the phosphopantetheinyl arm of the T domain to form and release c-AATrp. CpaD then regiospecifically dimethylallylates c-AATrp to form beta-cyclopiazonic acid. CpaD discriminates against free Trp but accepts tryptophan-containing thiohydantoins, diketopiperazines, and linear peptides as substrates for C4-prenylation and also acts as a regiospecific O-dimethylallyltransferase (DMAT) on a tyrosine-derived tetramic acid. The beta-cyclopiazonate dehydrogenase cpaO then carries out the dehydrogenation of beta-CPA to yield an unstable enimine product, which is captured by intramolecular cyclization to create the pentacyclic fused scaffold of alpha-cyclopiazonate. Finally, the cytochrome P450 monooxygenase cpaH mediates the conversion of CPA into the less toxic 2-oxocyclopiazonic acid, the end product of the CPA pathway in A.oryza. The polypeptide is Cytochrome P450 monooxygenase cpaH (Aspergillus oryzae (Yellow koji mold)).